The primary structure comprises 198 residues: Proteasome subunit beta type-2 (198 aa).

The protein belongs to the peptidase T1B family. In terms of assembly, the 26S proteasome consists of a 20S proteasome core and two 19S regulatory subunits. The 20S proteasome core is composed of 28 subunits that are arranged in four stacked rings, resulting in a barrel-shaped structure. The two end rings are each formed by seven alpha subunits, and the two central rings are each formed by seven beta subunits. The catalytic chamber with the active sites is on the inside of the barrel.

It is found in the cytoplasm. It localises to the nucleus. Its function is as follows. Non-catalytic component of the proteasome, a multicatalytic proteinase complex which is characterized by its ability to cleave peptides with Arg, Phe, Tyr, Leu, and Glu adjacent to the leaving group at neutral or slightly basic pH. The proteasome has an ATP-dependent proteolytic activity. This is Proteasome subunit beta type-2 (psmB2) from Dictyostelium discoideum (Social amoeba).